We begin with the raw amino-acid sequence, 607 residues long: Pyruvate decarboxylase 2 (607 aa).

The segment at 1 to 22 is disordered; the sequence is MDTKIGSIDACNPTNHDIGGPP. Residues D69 and H156 each contribute to the substrate site. Residues 434–516 form a thiamine pyrophosphate binding region; it reads DSWFNCQKLK…FLINNGGYTI (83 aa). Residues D484, N511, and G513 each coordinate Mg(2+). Residue E517 coordinates substrate.

Belongs to the TPP enzyme family. In terms of assembly, homotetramer. A metal cation serves as cofactor. Requires thiamine diphosphate as cofactor. Expressed at low levels in roots, shoots, flowers, siliques and seeds.

It catalyses the reaction a 2-oxocarboxylate + H(+) = an aldehyde + CO2. The protein is Pyruvate decarboxylase 2 (PDC2) of Arabidopsis thaliana (Mouse-ear cress).